Reading from the N-terminus, the 234-residue chain is Triggering receptor expressed on myeloid cells 1 (234 aa).

The signal sequence occupies residues 1 to 20; that stretch reads MRKTRLWGLLWMLFVSELRA. Topologically, residues 21–205 are extracellular; that stretch reads ATKLTEEKYE…TDIIRVPVFN (185 aa). Residues 26 to 134 enclose the Ig-like V-type domain; sequence EEKYELKEGQ…LFDRIRLVVT (109 aa). A disulfide bond links Cys41 and Cys113. N-linked (GlcNAc...) asparagine glycans are attached at residues Asn146, Asn191, and Asn194. A helical membrane pass occupies residues 206–226; it reads IVILLAGGFLSKSLVFSVLFA. The Cytoplasmic portion of the chain corresponds to 227 to 234; sequence VTLRSFVP.

In terms of assembly, monomer. Homomultimer; when activated. Interacts with TYROBP/DAP12. Interacts with TLR4. In terms of processing, glycosylated. Mostly expressed by immune cells of the myeloid lineage, such as monocytes, macrophages, neutrophils and dendritic cells. Expression is associated with a mature stage of myeloid development. Highly expressed in adult liver, lung and spleen than in corresponding fetal tissue. Also expressed in the lymph node, placenta, spinal cord and heart tissues. Isoform 2 was detected in the lung, liver and mature monocytes.

The protein resides in the cell membrane. It is found in the secreted. Its function is as follows. Cell surface receptor that plays important roles in innate and adaptive immunity by amplifying inflammatory responses. Upon activation by various ligands such as PGLYRP1, HMGB1 or HSP70, multimerizes and forms a complex with transmembrane adapter TYROBP/DAP12. In turn, initiates a SYK-mediated cascade of tyrosine phosphorylation, activating multiple downstream mediators such as BTK, MAPK1, MAPK3 or phospholipase C-gamma. This cascade promotes the neutrophil- and macrophage-mediated release of pro-inflammatory cytokines and/or chemokines, as well as their migration and thereby amplifies inflammatory responses that are triggered by bacterial and fungal infections. By also promoting the amplification of inflammatory signals that are initially triggered by Toll-like receptor (TLR) and NOD-like receptor engagement, plays a major role in the pathophysiology of acute and chronic inflammatory diseases of different etiologies including septic shock and atherosclerosis. In terms of biological role, acts as a decoy receptor, counterbalancing TREM1 pro-inflammatory activity through the neutralization of its ligand. The polypeptide is Triggering receptor expressed on myeloid cells 1 (TREM1) (Homo sapiens (Human)).